We begin with the raw amino-acid sequence, 465 residues long: 23S rRNA (uracil(1939)-C(5))-methyltransferase RlmD (465 aa).

The tract at residues 1-24 (MSEAVPLSTRRASSAGDAPGRAPV) is disordered. A TRAM domain is found at 16 to 80 (GDAPGRAPVL…PTYEQAQVVD (65 aa)). [4Fe-4S] cluster is bound by residues cysteine 93, cysteine 99, cysteine 102, and cysteine 181. The S-adenosyl-L-methionine site is built by glutamine 289, phenylalanine 318, asparagine 323, glutamate 339, asparagine 367, and aspartate 388. Cysteine 421 (nucleophile) is an active-site residue.

The protein belongs to the class I-like SAM-binding methyltransferase superfamily. RNA M5U methyltransferase family. RlmD subfamily.

The enzyme catalyses uridine(1939) in 23S rRNA + S-adenosyl-L-methionine = 5-methyluridine(1939) in 23S rRNA + S-adenosyl-L-homocysteine + H(+). Catalyzes the formation of 5-methyl-uridine at position 1939 (m5U1939) in 23S rRNA. The chain is 23S rRNA (uracil(1939)-C(5))-methyltransferase RlmD from Burkholderia mallei (strain ATCC 23344).